Consider the following 383-residue polypeptide: Pleckstrin homology domain-containing family A member 1 (383 aa).

PH domains lie at 7 to 112 (QNRI…KAIK) and 191 to 289 (AVIK…GAIV). Valine 284 is modified (phosphoserine). Residues 362–383 (LPRSSQGTSRSRLSLQESQLPK) form a disordered region. Positions 370-383 (SRSRLSLQESQLPK) are enriched in low complexity.

Interacts with MPDZ and PTPN13.

Its subcellular location is the cytoplasm. The protein localises to the cell membrane. It localises to the nucleus. In terms of biological role, binds specifically to phosphatidylinositol 3,4-diphosphate (PtdIns3,4P2), but not to other phosphoinositides. May recruit other proteins to the plasma membrane. The protein is Pleckstrin homology domain-containing family A member 1 (Plekha1) of Mus musculus (Mouse).